The sequence spans 519 residues: Protein nucleotidyltransferase YdiU (519 aa).

Gly-100, Gly-102, Arg-103, Lys-123, Asp-135, Gly-136, Arg-193, and Arg-200 together coordinate ATP. The active-site Proton acceptor is Asp-270. Mg(2+)-binding residues include Asn-271 and Asp-280. ATP is bound at residue Asp-280.

The protein belongs to the SELO family. Mg(2+) serves as cofactor. Requires Mn(2+) as cofactor.

The catalysed reaction is L-seryl-[protein] + ATP = 3-O-(5'-adenylyl)-L-seryl-[protein] + diphosphate. The enzyme catalyses L-threonyl-[protein] + ATP = 3-O-(5'-adenylyl)-L-threonyl-[protein] + diphosphate. It carries out the reaction L-tyrosyl-[protein] + ATP = O-(5'-adenylyl)-L-tyrosyl-[protein] + diphosphate. It catalyses the reaction L-histidyl-[protein] + UTP = N(tele)-(5'-uridylyl)-L-histidyl-[protein] + diphosphate. The catalysed reaction is L-seryl-[protein] + UTP = O-(5'-uridylyl)-L-seryl-[protein] + diphosphate. The enzyme catalyses L-tyrosyl-[protein] + UTP = O-(5'-uridylyl)-L-tyrosyl-[protein] + diphosphate. Nucleotidyltransferase involved in the post-translational modification of proteins. It can catalyze the addition of adenosine monophosphate (AMP) or uridine monophosphate (UMP) to a protein, resulting in modifications known as AMPylation and UMPylation. In Xylella fastidiosa (strain 9a5c), this protein is Protein nucleotidyltransferase YdiU.